The sequence spans 171 residues: MAKRVRVGQIVNTQGVRGQVRLWPLTEKPSRFNEIKRVFVEAPPQGAPEVLTITSAHPLKKLVIVSFQEISDMTQAERLKGCYLTIPVEEVPAPEPDSYYHFQLEGLSVFTEAGERLGQIEEILETGSNDVYVVRQASPPGEVLIPALKSVVLKVDLAAGTMTVRLPDGLR.

One can recognise a PRC barrel domain in the interval 96–170 (PDSYYHFQLE…TMTVRLPDGL (75 aa)).

Belongs to the RimM family. Binds ribosomal protein uS19.

The protein resides in the cytoplasm. Functionally, an accessory protein needed during the final step in the assembly of 30S ribosomal subunit, possibly for assembly of the head region. Essential for efficient processing of 16S rRNA. May be needed both before and after RbfA during the maturation of 16S rRNA. It has affinity for free ribosomal 30S subunits but not for 70S ribosomes. The polypeptide is Ribosome maturation factor RimM (Heliobacterium modesticaldum (strain ATCC 51547 / Ice1)).